Reading from the N-terminus, the 248-residue chain is 2,3-bisphosphoglycerate-dependent phosphoglycerate mutase (248 aa).

Substrate-binding positions include 8 to 15 (RHGESTWN), 21 to 22 (TG), R60, 87 to 90 (ERHY), K98, 114 to 115 (RR), and 183 to 184 (GN). The active-site Tele-phosphohistidine intermediate is H9. The active-site Proton donor/acceptor is E87.

It belongs to the phosphoglycerate mutase family. BPG-dependent PGAM subfamily. In terms of assembly, homodimer.

The enzyme catalyses (2R)-2-phosphoglycerate = (2R)-3-phosphoglycerate. It participates in carbohydrate degradation; glycolysis; pyruvate from D-glyceraldehyde 3-phosphate: step 3/5. In terms of biological role, catalyzes the interconversion of 2-phosphoglycerate and 3-phosphoglycerate. This is 2,3-bisphosphoglycerate-dependent phosphoglycerate mutase from Burkholderia orbicola (strain MC0-3).